The sequence spans 153 residues: Histone H2A (153 aa).

Disordered stretches follow at residues 1–27 (MDTG…VSRS) and 131–153 (KAAA…PKKA). Low complexity predominate over residues 132 to 147 (AAAAATKEPKSPAKAT). Residues 149-152 (SPKK) carry the SPKK motif motif.

This sequence belongs to the histone H2A family. In terms of assembly, the nucleosome is a histone octamer containing two molecules each of H2A, H2B, H3 and H4 assembled in one H3-H4 heterotetramer and two H2A-H2B heterodimers. The octamer wraps approximately 147 bp of DNA.

It is found in the nucleus. It localises to the chromosome. Functionally, core component of nucleosome. Nucleosomes wrap and compact DNA into chromatin, limiting DNA accessibility to the cellular machineries which require DNA as a template. Histones thereby play a central role in transcription regulation, DNA repair, DNA replication and chromosomal stability. DNA accessibility is regulated via a complex set of post-translational modifications of histones, also called histone code, and nucleosome remodeling. The sequence is that of Histone H2A from Euphorbia esula (Leafy spurge).